The sequence spans 316 residues: Meiotically up-regulated gene 154 protein (316 aa).

4 helical membrane-spanning segments follow: residues 41-61 (YSIP…IYIK), 88-108 (AFLS…FIFS), 159-179 (FLLN…WFYS), and 186-206 (LLTF…SLLL). The tract at residues 291 to 316 (HDSGISRDSSSPFKRFPHLSDGSSRF) is disordered.

Its subcellular location is the endoplasmic reticulum membrane. In terms of biological role, has a role in meiosis. In Schizosaccharomyces pombe (strain 972 / ATCC 24843) (Fission yeast), this protein is Meiotically up-regulated gene 154 protein (mug154).